Consider the following 78-residue polypeptide: Acyl carrier protein (78 aa).

The Carrier domain maps to 2–77; it reads SDVLERVSKI…DAVKFISEKV (76 aa). Residue Ser-37 is modified to O-(pantetheine 4'-phosphoryl)serine.

This sequence belongs to the acyl carrier protein (ACP) family. In terms of processing, 4'-phosphopantetheine is transferred from CoA to a specific serine of apo-ACP by AcpS. This modification is essential for activity because fatty acids are bound in thioester linkage to the sulfhydryl of the prosthetic group.

It localises to the cytoplasm. It participates in lipid metabolism; fatty acid biosynthesis. Its function is as follows. Carrier of the growing fatty acid chain in fatty acid biosynthesis. This chain is Acyl carrier protein, found in Maricaulis maris (strain MCS10) (Caulobacter maris).